The primary structure comprises 629 residues: DNA mismatch repair protein MutL (629 aa).

Residues 376-396 (QYHEKPQQNQPHFSNTPVLPN) are disordered. A compositionally biased stretch (polar residues) spans 382 to 396 (QQNQPHFSNTPVLPN).

It belongs to the DNA mismatch repair MutL/HexB family.

Its function is as follows. This protein is involved in the repair of mismatches in DNA. It is required for dam-dependent methyl-directed DNA mismatch repair. May act as a 'molecular matchmaker', a protein that promotes the formation of a stable complex between two or more DNA-binding proteins in an ATP-dependent manner without itself being part of a final effector complex. This is DNA mismatch repair protein MutL from Haemophilus influenzae (strain PittEE).